The chain runs to 663 residues: Probable receptor-like protein kinase At1g49730 (663 aa).

Residues methionine 1–alanine 25 form the signal peptide. Residues alanine 26–proline 254 lie on the Extracellular side of the membrane. N-linked (GlcNAc...) asparagine glycosylation is found at asparagine 36, asparagine 46, asparagine 70, asparagine 101, and asparagine 171. A disordered region spans residues serine 213–arginine 243. Over residues proline 224–arginine 243 the composition is skewed to polar residues. Residues threonine 255–isoleucine 275 form a helical membrane-spanning segment. Over arginine 276–phenylalanine 663 the chain is Cytoplasmic. Residues asparagine 327–phenylalanine 609 enclose the Protein kinase domain. ATP is bound by residues isoleucine 333 to valine 341 and lysine 355. Residue aspartate 451 is the Proton acceptor of the active site. A disordered region spans residues arginine 631 to phenylalanine 663. The span at serine 640 to serine 652 shows a compositional bias: low complexity.

It belongs to the protein kinase superfamily. Ser/Thr protein kinase family.

The protein resides in the cell membrane. It carries out the reaction L-seryl-[protein] + ATP = O-phospho-L-seryl-[protein] + ADP + H(+). The catalysed reaction is L-threonyl-[protein] + ATP = O-phospho-L-threonyl-[protein] + ADP + H(+). The sequence is that of Probable receptor-like protein kinase At1g49730 from Arabidopsis thaliana (Mouse-ear cress).